Reading from the N-terminus, the 233-residue chain is Homeobox protein Hox-D4a (233 aa).

Residues 124–129 carry the Antp-type hexapeptide motif; that stretch reads VYPWMK. A DNA-binding region (homeobox) is located at residues 145–204; the sequence is PKRSRTAYTRQQVLELEKEFHFNRYLTRRRRIEIAHTLCLSERQIKIWFQNRRMKWTKDH. The tract at residues 203–233 is disordered; the sequence is DHKLPNTKGRSAPASSHLQSIHKDQTDITSL. A compositionally biased stretch (basic and acidic residues) spans 223-233; it reads IHKDQTDITSL.

It belongs to the Antp homeobox family. Deformed subfamily.

Its subcellular location is the nucleus. Its function is as follows. Sequence-specific transcription factor which is part of a developmental regulatory system that provides cells with specific positional identities on the anterior-posterior axis. This chain is Homeobox protein Hox-D4a (hoxd4a), found in Takifugu rubripes (Japanese pufferfish).